We begin with the raw amino-acid sequence, 377 residues long: MSTPSQAEVRRMIAAAGTIVVKVGSSSLTQPSGHLDPDKLDALAAALAQVRLMGGRVVLVSSGAIAAGFGPLGFDSRPVDVATQQATAAVGQGLLMARYETAFGRFGIRVGQILITAEDTIRATQYRNVERTLDRLLDLGVVPIINENDSLASNEIRFGDNDRLSALVANLVRAEALVLLTDVDALYTAPPSQPGSRRVEYVPNVIDALGDIQVSGSGSKVGTGGMVTKLEAARVAAVSGIPTVLTCASNAGPAMMGDPVGTVFAPVKARGSSRRLWIGFAADPRGTIVVDAGAGQAIRGGRASLLAAGALEVHGDFSAGDPVWIDAESGEHLARGLAGFDSEEIPQMLGRNTAQLKRFLGPQYAHPLVHRDNLVLV.

ATP is bound at residue lysine 22. Residues serine 62, aspartate 149, and asparagine 161 each coordinate substrate. Residues 181 to 182 (TD) and 223 to 229 (TGGMVTK) each bind ATP. One can recognise a PUA domain in the interval 285 to 363 (RGTIVVDAGA…AQLKRFLGPQ (79 aa)).

It belongs to the glutamate 5-kinase family.

The protein resides in the cytoplasm. It carries out the reaction L-glutamate + ATP = L-glutamyl 5-phosphate + ADP. It participates in amino-acid biosynthesis; L-proline biosynthesis; L-glutamate 5-semialdehyde from L-glutamate: step 1/2. In terms of biological role, catalyzes the transfer of a phosphate group to glutamate to form L-glutamate 5-phosphate. This is Glutamate 5-kinase from Bifidobacterium longum (strain DJO10A).